An 812-amino-acid polypeptide reads, in one-letter code: Lon protease (812 aa).

One can recognise a Lon N-terminal domain in the interval 12–205 (LPMLPLRGVL…YLCELLAKEM (194 aa)). 357 to 364 (GPPGVGKT) contributes to the ATP binding site. The region spanning 593–774 (ENQVGVATGL…DEVLEETLLK (182 aa)) is the Lon proteolytic domain. Residues Ser680 and Lys723 contribute to the active site.

Belongs to the peptidase S16 family. As to quaternary structure, homohexamer. Organized in a ring with a central cavity.

The protein resides in the cytoplasm. It catalyses the reaction Hydrolysis of proteins in presence of ATP.. In terms of biological role, ATP-dependent serine protease that mediates the selective degradation of mutant and abnormal proteins as well as certain short-lived regulatory proteins. Required for cellular homeostasis and for survival from DNA damage and developmental changes induced by stress. Degrades polypeptides processively to yield small peptide fragments that are 5 to 10 amino acids long. Binds to DNA in a double-stranded, site-specific manner. This chain is Lon protease, found in Syntrophomonas wolfei subsp. wolfei (strain DSM 2245B / Goettingen).